Reading from the N-terminus, the 83-residue chain is Mitochondrial import inner membrane translocase subunit Tim8 B (83 aa).

An N-acetylalanine modification is found at A2. The Twin CX3C motif signature appears at 36–59 (CWDKCVEKPGNRLDSRTENCLSSC). Disulfide bonds link C36-C59 and C40-C55.

This sequence belongs to the small Tim family. As to quaternary structure, heterohexamer; possibly composed of 3 copies of TIMM8B and 3 copies of TIMM13, named soluble 70 kDa complex. Associates with the TIM22 complex, whose core is composed of TIMM22.

Its subcellular location is the mitochondrion inner membrane. Probable mitochondrial intermembrane chaperone that participates in the import and insertion of some multi-pass transmembrane proteins into the mitochondrial inner membrane. Also required for the transfer of beta-barrel precursors from the TOM complex to the sorting and assembly machinery (SAM complex) of the outer membrane. Acts as a chaperone-like protein that protects the hydrophobic precursors from aggregation and guide them through the mitochondrial intermembrane space. The sequence is that of Mitochondrial import inner membrane translocase subunit Tim8 B (TIMM8B) from Bos taurus (Bovine).